A 363-amino-acid polypeptide reads, in one-letter code: MAFVASVPVFANASGLKTEAKVCQKPALKNSFFRGEEVTSRSFFASQAVSAKPATTFEVDTTIRAQAVDAKKKGDIPLNLFRPANPYIGKCIYNERIVGEGAPGETKHIIFTHEGKVPYLEGQSIGIIPPGTDKDGKPHKLRLYSIASTRHGDFGDDKTVSLSVKRLEYTDANGNLVKGVCSNYLCDLKPGDEVMITGPVGTTMLMPEDQSATIIMLATGTGIAPFRSFLRRMFEETHADYKFNGLAWLFLGVPTSSTLLYREELEKMQKANPNNFRLDYAISREQTDSKGEKMYIQNRIAEYANEFWNMIQKPNTFVYMCGLRGMEDGIQQCMEDIAKANGTTWDAVVKGLKKEKRWHVETY.

The transit peptide at 1 to 65 (MAFVASVPVF…TFEVDTTIRA (65 aa)) directs the protein to the cyanelle. The FAD-binding FR-type domain occupies 84 to 206 (ANPYIGKCIY…TGPVGTTMLM (123 aa)). Residues 142–145 (RLYS), 163–165 (SVK), tyrosine 169, 180–182 (VCS), and threonine 221 each bind FAD. Residues serine 145 and lysine 165 each coordinate NADP(+). NADP(+) contacts are provided by residues threonine 221, 253–254 (VP), 283–284 (SR), lysine 293, 322–323 (GL), and glutamate 361.

Belongs to the ferredoxin--NADP reductase type 1 family. The cofactor is FAD.

Its subcellular location is the plastid. It localises to the cyanelle stroma. The protein resides in the cyanelle thylakoid membrane. It carries out the reaction 2 reduced [2Fe-2S]-[ferredoxin] + NADP(+) + H(+) = 2 oxidized [2Fe-2S]-[ferredoxin] + NADPH. May play a key role in regulating the relative amounts of cyclic and non-cyclic electron flow to meet the demands of the plant for ATP and reducing power. The chain is Ferredoxin--NADP reductase, cyanelle (PETH) from Cyanophora paradoxa.